We begin with the raw amino-acid sequence, 379 residues long: tRNA-specific 2-thiouridylase MnmA (379 aa).

Residues 9 to 16 (AMSGGVDS) and Met35 contribute to the ATP site. The interaction with target base in tRNA stretch occupies residues 94-96 (NPD). The active-site Nucleophile is Cys99. A disulfide bridge links Cys99 with Cys195. Gly123 contacts ATP. The tract at residues 145 to 147 (KDQ) is interaction with tRNA. Cys195 serves as the catalytic Cysteine persulfide intermediate. The interaction with tRNA stretch occupies residues 307 to 308 (RY).

It belongs to the MnmA/TRMU family.

The protein localises to the cytoplasm. The catalysed reaction is S-sulfanyl-L-cysteinyl-[protein] + uridine(34) in tRNA + AH2 + ATP = 2-thiouridine(34) in tRNA + L-cysteinyl-[protein] + A + AMP + diphosphate + H(+). Functionally, catalyzes the 2-thiolation of uridine at the wobble position (U34) of tRNA, leading to the formation of s(2)U34. The sequence is that of tRNA-specific 2-thiouridylase MnmA from Xylella fastidiosa (strain M23).